The sequence spans 1005 residues: Probable histidine kinase 4 (1005 aa).

The Cytoplasmic portion of the chain corresponds to Met1 to Lys37. The chain crosses the membrane as a helical span at residues Leu38–His58. Over Trp59 to Ser333 the chain is Extracellular. A CHASE domain is found at His110–Val321. Residues Ala334–Ala354 traverse the membrane as a helical segment. The Cytoplasmic segment spans residues Ala355 to Ser1005. Residues Thr389 to Arg675 enclose the Histidine kinase domain. Phosphohistidine; by autocatalysis is present on His392. Response regulatory domains are found at residues Ser700–Leu829 and Asn862–Leu999. Asp912 bears the 4-aspartylphosphate mark.

In terms of processing, activation probably requires a transfer of a phosphate group between a His in the transmitter domain and an Asp of the receiver domain. In terms of tissue distribution, highly expressed in young leaves and spikelets, and at lower levels in roots, mature leaves and stems.

The protein resides in the cell membrane. The enzyme catalyses ATP + protein L-histidine = ADP + protein N-phospho-L-histidine.. Cytokinin receptor related to bacterial two-component regulators. Functions as a histidine kinase and transmits the stress signal to a downstream MAPK cascade. This is Probable histidine kinase 4 from Oryza sativa subsp. japonica (Rice).